The primary structure comprises 145 residues: uncharacterized protein (145 aa).

The N-terminal stretch at 1–29 is a signal peptide; that stretch reads MHLIRAAGAVCLAVVLIAGCRFNEDQHQA. Residues 67-101 adopt a coiled-coil conformation; that stretch reads KNGTQEKAEIQDKLSGVNQEGEEALDEMKMILSEL.

This is an uncharacterized protein from Bacillus subtilis (strain 168).